Reading from the N-terminus, the 114-residue chain is Small ribosomal subunit protein uS14m (114 aa).

Belongs to the universal ribosomal protein uS14 family.

It localises to the mitochondrion. This chain is Small ribosomal subunit protein uS14m (MRP2), found in Eremothecium gossypii (strain ATCC 10895 / CBS 109.51 / FGSC 9923 / NRRL Y-1056) (Yeast).